We begin with the raw amino-acid sequence, 368 residues long: Transaldolase (368 aa).

K140 serves as the catalytic Schiff-base intermediate with substrate.

Belongs to the transaldolase family. Type 2 subfamily.

The protein localises to the cytoplasm. It catalyses the reaction D-sedoheptulose 7-phosphate + D-glyceraldehyde 3-phosphate = D-erythrose 4-phosphate + beta-D-fructose 6-phosphate. It participates in carbohydrate degradation; pentose phosphate pathway; D-glyceraldehyde 3-phosphate and beta-D-fructose 6-phosphate from D-ribose 5-phosphate and D-xylulose 5-phosphate (non-oxidative stage): step 2/3. Functionally, transaldolase is important for the balance of metabolites in the pentose-phosphate pathway. The sequence is that of Transaldolase from Thermobifida fusca (strain YX).